We begin with the raw amino-acid sequence, 450 residues long: Phosphoglucosamine mutase (450 aa).

The active-site Phosphoserine intermediate is the Ser-101. Residues Ser-101, Asp-240, Asp-242, and Asp-244 each contribute to the Mg(2+) site. Ser-101 is subject to Phosphoserine.

The protein belongs to the phosphohexose mutase family. Mg(2+) is required as a cofactor. Post-translationally, activated by phosphorylation.

It catalyses the reaction alpha-D-glucosamine 1-phosphate = D-glucosamine 6-phosphate. Catalyzes the conversion of glucosamine-6-phosphate to glucosamine-1-phosphate. In Streptococcus pneumoniae (strain JJA), this protein is Phosphoglucosamine mutase.